The primary structure comprises 931 residues: Semaphorin-6C (931 aa).

Positions 1 to 25 (MPRAPHSMPLLLLLLLLSSLPQAQA) are cleaved as a signal peptide. Over 26–605 (AFPQDPTPLL…ASASRSIPIP (580 aa)) the chain is Extracellular. In terms of domain architecture, Sema spans 31–517 (PTPLLTSDLQ…FPGCIVYLSL (487 aa)). A glycan (N-linked (GlcNAc...) asparagine) is linked at asparagine 71. 4 cysteine pairs are disulfide-bonded: cysteine 112/cysteine 122, cysteine 140/cysteine 149, cysteine 263/cysteine 374, and cysteine 288/cysteine 333. An N-linked (GlcNAc...) asparagine glycan is attached at asparagine 287. The N-linked (GlcNAc...) asparagine glycan is linked to asparagine 438. 4 disulfides stabilise this stretch: cysteine 480/cysteine 511, cysteine 520/cysteine 538, cysteine 526/cysteine 571, and cysteine 530/cysteine 546. The segment at 556 to 591 (DVDLTGNQESTEHGDCQDGATGSQSGPGDSAYGVRR) is disordered. The chain crosses the membrane as a helical span at residues 606–626 (LLLACVAAAFALGASVSGLLV). Topologically, residues 627 to 931 (SCACRRANRR…PAPHGGHFNF (305 aa)) are cytoplasmic. 2 disordered regions span residues 655 to 747 (LARL…GGPA) and 777 to 931 (HGPQ…HFNF). The segment covering 693-708 (PPELACLPTPETTPEL) has biased composition (low complexity). Residues 893 to 906 (PEGHRGRSLKRVDV) show a composition bias toward basic and acidic residues. Pro residues predominate over residues 911 to 923 (SPKPPLASPPQPA).

This sequence belongs to the semaphorin family.

The protein localises to the cell membrane. May be a stop signal for the dorsal root ganglion neurons in their target areas, and possibly also for other neurons. May also be involved in the maintenance and remodeling of neuronal connections. This chain is Semaphorin-6C (Sema6c), found in Mus musculus (Mouse).